Consider the following 491-residue polypeptide: MNTQDLAKLRSIVPEMRRVRHIHFVGIGGAGMGGIAEVLANEGYQISGSDLAPNPVTQQLSQLGATIYFNHRPENVRDASVVVVSSAISADNPEIVAAHEARIPVIRRAEMLAELMRFRHGIAIAGTHGKTTTTAMVSSIYAEAGLDPTFVNGGLVKAAGVHARLGHSRYLIAEADESDASFLHLQPMVAIVTNIEADHMDTYHGDFENLKQTFINFLHNLPFYGRAVMCVDDPVIRELLPRVGRQITTYGFSDDADVRVEDYRQLGAQGHFRLVRQDKEILQVTLNAPGRHNALNAAAAVAVATEEGIDDQAILRALESFQGTGRRFDFLGEFPLAEVNGKPGSAMLIDDYGHHPTEVDATIKAARAGWPDKNLVMLFQPHRYTRTRDLYDDFANVLTQVDALLMLDVYPAGEAPIPGADSRSLCRTIRGRGKVDPILVSDPAQAAEMLASVLTGNDLVLVQGAGNIGKIARHLAEIKLAPQKTEEERHG.

126–132 serves as a coordination point for ATP; the sequence is GTHGKTT.

This sequence belongs to the MurCDEF family.

It is found in the cytoplasm. It carries out the reaction UDP-N-acetyl-alpha-D-muramate + L-alanine + ATP = UDP-N-acetyl-alpha-D-muramoyl-L-alanine + ADP + phosphate + H(+). It functions in the pathway cell wall biogenesis; peptidoglycan biosynthesis. Cell wall formation. In Klebsiella pneumoniae (strain 342), this protein is UDP-N-acetylmuramate--L-alanine ligase.